The sequence spans 92 residues: Acylphosphatase (92 aa).

A disulfide bond links cysteine 5 and cysteine 49. The region spanning 5–92 is the Acylphosphatase-like domain; sequence CIIAWIYGRV…SGELTDFRIR (88 aa). Residues arginine 20 and asparagine 38 contribute to the active site.

The protein belongs to the acylphosphatase family.

The enzyme catalyses an acyl phosphate + H2O = a carboxylate + phosphate + H(+). This Escherichia coli O1:K1 / APEC protein is Acylphosphatase.